The chain runs to 116 residues: Nucleoid-associated protein MLBr02330 (116 aa).

The disordered stretch occupies residues Leu-96–Thr-116.

Belongs to the YbaB/EbfC family. In terms of assembly, homodimer.

It is found in the cytoplasm. The protein resides in the nucleoid. Its function is as follows. Binds to DNA and alters its conformation. May be involved in regulation of gene expression, nucleoid organization and DNA protection. The polypeptide is Nucleoid-associated protein MLBr02330 (Mycobacterium leprae (strain Br4923)).